The primary structure comprises 348 residues: Nuclear receptor subfamily 1 group I member 3 (348 aa).

Positions 8 to 83 (PRSCMVCGDR…AGMKKEMILS (76 aa)) form a DNA-binding region, nuclear receptor. The NR C4-type zinc-finger motif lies at 11–31 (CMVCGDRATGYHFHALTCEGC). A Phosphothreonine; by PKC modification is found at Thr-38. An NR C4-type zinc finger spans residues 47 to 71 (CPFAGNCKVNKAQRRHCPACRLQKC). The 240-residue stretch at 109 to 348 (GQQELVQTLL…MMPLLQEICS (240 aa)) folds into the NR LBD domain.

Belongs to the nuclear hormone receptor family. NR1 subfamily. In terms of assembly, heterodimer of NR1I3 and RXR. Interacts with PSMC4. Interacts with ECT2. Directly interacts with DNAJC7; this complex may also include HSP90. Interacts with CRY1. Interacts with CRY2 in a ligand-dependent manner. Phosphorylated at Thr-38 by PKC, dephosphorylation of Thr-38 is required for nuclear translocation and activation.

It is found in the nucleus. The protein localises to the cytoplasm. Its subcellular location is the cytoskeleton. Functionally, binds and transactivates the retinoic acid response elements that control expression of the retinoic acid receptor beta 2 and alcohol dehydrogenase 3 genes. Transactivates both the phenobarbital responsive element module of the human CYP2B6 gene and the CYP3A4 xenobiotic response element. The polypeptide is Nuclear receptor subfamily 1 group I member 3 (NR1I3) (Callorhinus ursinus (Northern fur seal)).